The following is a 277-amino-acid chain: Probable ABC transporter permease protein y4oR (277 aa).

Transmembrane regions (helical) follow at residues 15 to 35 (LWTLFWCVLAFVYLFPYTWMV), 79 to 99 (VVTIVSVVLVIAVSAPAAYAL), 109 to 129 (LLVAILVARIIPGIAIGVPVY), 140 to 160 (TYQALIIINVAVNIPFAIWLM), 189 to 209 (IMMPLVLGGMLATAVFVFIAV), 213 to 233 (FLFALILTTSVSPTAPLAMLG), and 242 to 262 (WDAVGAAAFLVSTPVIAFAFI). The 190-residue stretch at 74–263 (IINSAVVTIV…TPVIAFAFIM (190 aa)) folds into the ABC transmembrane type-1 domain.

Belongs to the binding-protein-dependent transport system permease family. MalFG subfamily.

The protein localises to the cell inner membrane. Probably part of the binding-protein-dependent transport system y4oPQRS. This system probably transports a sugar-like molecule. Probably responsible for the translocation of the substrate across the membrane. The chain is Probable ABC transporter permease protein y4oR from Sinorhizobium fredii (strain NBRC 101917 / NGR234).